Reading from the N-terminus, the 155-residue chain is Interleukin-2 (155 aa).

Positions 1–20 (MYKMQLLSCIALTLVLVANS) are cleaved as a signal peptide. Residue Thr-23 is glycosylated (O-linked (GalNAc...) threonine). A disulfide bridge links Cys-79 with Cys-127.

The protein belongs to the IL-2 family.

Its subcellular location is the secreted. Functionally, cytokine produced by activated CD4-positive helper T-cells and to a lesser extend activated CD8-positive T-cells and natural killer (NK) cells that plays pivotal roles in the immune response and tolerance. Binds to a receptor complex composed of either the high-affinity trimeric IL-2R (IL2RA/CD25, IL2RB/CD122 and IL2RG/CD132) or the low-affinity dimeric IL-2R (IL2RB and IL2RG). Interaction with the receptor leads to oligomerization and conformation changes in the IL-2R subunits resulting in downstream signaling starting with phosphorylation of JAK1 and JAK3. In turn, JAK1 and JAK3 phosphorylate the receptor to form a docking site leading to the phosphorylation of several substrates including STAT5. This process leads to activation of several pathways including STAT, phosphoinositide-3-kinase/PI3K and mitogen-activated protein kinase/MAPK pathways. Functions as a T-cell growth factor and can increase NK-cell cytolytic activity as well. Promotes strong proliferation of activated B-cells and subsequently immunoglobulin production. Plays a pivotal role in regulating the adaptive immune system by controlling the survival and proliferation of regulatory T-cells, which are required for the maintenance of immune tolerance. Moreover, participates in the differentiation and homeostasis of effector T-cell subsets, including Th1, Th2, Th17 as well as memory CD8-positive T-cells. In Halichoerus grypus (Gray seal), this protein is Interleukin-2 (IL2).